Reading from the N-terminus, the 595-residue chain is NADH-quinone oxidoreductase subunit C/D (595 aa).

An NADH dehydrogenase I subunit C region spans residues 1 to 186 (MVTDNSKATD…TPYFLNNAKQ (186 aa)). The NADH dehydrogenase I subunit D stretch occupies residues 210-595 (DFMFLNLGPN…IDIVMADTDR (386 aa)).

It in the N-terminal section; belongs to the complex I 30 kDa subunit family. The protein in the C-terminal section; belongs to the complex I 49 kDa subunit family. As to quaternary structure, NDH-1 is composed of 13 different subunits. Subunits NuoB, CD, E, F, and G constitute the peripheral sector of the complex.

It is found in the cell inner membrane. It catalyses the reaction a quinone + NADH + 5 H(+)(in) = a quinol + NAD(+) + 4 H(+)(out). In terms of biological role, NDH-1 shuttles electrons from NADH, via FMN and iron-sulfur (Fe-S) centers, to quinones in the respiratory chain. The immediate electron acceptor for the enzyme in this species is believed to be ubiquinone. Couples the redox reaction to proton translocation (for every two electrons transferred, four hydrogen ions are translocated across the cytoplasmic membrane), and thus conserves the redox energy in a proton gradient. This chain is NADH-quinone oxidoreductase subunit C/D, found in Psychrobacter sp. (strain PRwf-1).